Consider the following 514-residue polypeptide: Cytochrome P450 monooxygenase FUS8 (514 aa).

The helical transmembrane segment at 24–44 threads the bilayer; the sequence is VFENLTVTNTVCAFIALFIIV. N-linked (GlcNAc...) asparagine glycosylation is found at Asn225 and Asn443. Cys460 contributes to the heme binding site.

Belongs to the cytochrome P450 family. The cofactor is heme.

Its subcellular location is the membrane. It participates in mycotoxin biosynthesis. Functionally, cytochrome P450 monooxygenase; part of the gene cluster that mediates the biosynthesis of the mycotoxin fusarin C. Within the cluster, FUS1, FUS2, FUS8 and FUS9 are sufficient for fusarin production. The roles of the other FUS members are yet undetermined. The fusarin C synthetase FUS1 is responsible for the condensation of one acetyl-coenzyme A (CoA) unit with six malonyl-CoA units and the amide linkage of the arising heptaketide and homoserine, subsequently releasing the first intermediate, prefusarin, as an alcohol with an open ring structure. The cytochrome P450 monooxygenase FUS8 participates in multiple oxidation processes at carbon C-20 and is able to use the FUS1 product as substrate, resulting in formation of 20-hydroxy-prefusarin. This reaction seems to be essential before the 2-pyrrolidone ring closure can be catalyzed by FUS2, generating 20-hydroxy-fusarin. FUS8 is able to further oxidizes carbon C-20 after ring closure, resulting in the formation of carboxy-fusarin C. As the last step, FUS9 methylates the hydroxyl group at C-21 to generate fusarin C. Fusarin C can then rearrange to epi-fusarin C, the (z)-isomers, and fusarin A and fusarin D. In Gibberella fujikuroi (strain CBS 195.34 / IMI 58289 / NRRL A-6831) (Bakanae and foot rot disease fungus), this protein is Cytochrome P450 monooxygenase FUS8.